Reading from the N-terminus, the 501-residue chain is Atypical kinase COQ8, mitochondrial (501 aa).

The transit peptide at 1–29 directs the protein to the mitochondrion; that stretch reads MVTNMVKLRNLRRLYCSSRLLRTIQNGRI. A disordered region spans residues 41–69; that stretch reads YTTKSAKEGEENVERKHEEEKKDTLKSSS. Over residues 45 to 65 the composition is skewed to basic and acidic residues; the sequence is SAKEGEENVERKHEEEKKDTL. A KxGQ motif motif is present at residues 134 to 137; sequence KIGQ. In terms of domain architecture, Protein kinase spans 188–501; it reads KFDKIPMAAA…LFKEIFAYKV (314 aa). The AAAS motif motif lies at 195–198; sequence AAAS. Residues Ser-198, Lys-216, and 303–306 each bind ATP; that span reads MTRM. Asp-346 (proton acceptor) is an active-site residue. ATP is bound by residues Asn-351 and Asp-365.

The protein belongs to the protein kinase superfamily. ADCK protein kinase family. Forms homopolymers. Predominantly associated with a complex of about 500 kDa.

The protein resides in the mitochondrion inner membrane. It participates in cofactor biosynthesis; ubiquinone biosynthesis. Atypical kinase involved in the biosynthesis of coenzyme Q, also named ubiquinone, an essential lipid-soluble electron transporter for aerobic cellular respiration. Its substrate specificity is still unclear: may act as a protein kinase that mediates phosphorylation of COQ3, COQ5 and/or COQ7. According to other reports, acts as a small molecule kinase, possibly a lipid kinase that phosphorylates a prenyl lipid in the ubiquinone biosynthesis pathway, as suggested by its ability to bind coenzyme Q lipid intermediates. The sequence is that of Atypical kinase COQ8, mitochondrial (COQ8) from Saccharomyces cerevisiae (strain ATCC 204508 / S288c) (Baker's yeast).